We begin with the raw amino-acid sequence, 79 residues long: Alpha-actitoxin-Ms11a-4 (79 aa).

The first 23 residues, 1–23 (MKVLVAVLVFALLMCMFVDIAES), serve as a signal peptide directing secretion. Positions 24 to 46 (RRRDNPEYPSGLRYDEEMGVFKR) are excised as a propeptide. 3 disulfides stabilise this stretch: cysteine 47–cysteine 61, cysteine 54–cysteine 67, and cysteine 60–cysteine 76. Tyrosine amide is present on tyrosine 78.

The protein resides in the secreted. It is found in the nematocyst. In terms of biological role, alpha-toxins act on postsynaptic membranes, they bind to the nicotinic acetylcholine receptors (nAChR) and thus inhibit them. This toxin very weakly competes with alpha-bungarotoxin for binding to orthosteric sites on muscle-type T.carlifornicus (IC(50)=14.95 uM) and human alpha-7/CHRNA7 nAChRs (IC(50)&gt;45 uM). In Metridium senile (Brown sea anemone), this protein is Alpha-actitoxin-Ms11a-4.